The chain runs to 434 residues: MDFEKDVIRTVTFKLIPALVILYLVAYIDRAAVGFAHLHMGADVGIGDAAYGLGAGLFFIGYFLFEVPSNLLLDKFGARKWFTRILLTWGLITMAMALIQGPKSFYLLRFLLGVAEAGFFPGVLYLITQWYPVRHRGKIMGMFVLSQPIAMMIAGPLAGLLLGMDGIANLHGWQWLFVAVGLPAVLLALPTFLWLPDNIDKVKWLSIEQKQWLKNELVKDEAEYDQTRHANPLHALKDKRVLLLALYYLPVTLSIYGLNLWLPTIIKQFGGGSDIQIGFLSSIPYIFGIIGLLIIPRSTDRLNDRYGHLSFLYALGACAMFLSGWLNSPVMQLAALAVVAFCLFSSTAVFWTLPGRFLTGASAAAGIALINSVGNLGGYVGPFGIGLLKEYTGNMAAGLYFLSIVMLFGLILTYIVYAKLERQKTQTVNIQKPL.

Helical transmembrane passes span 15-35, 45-65, 85-105, 110-130, 142-162, 175-195, 241-261, 275-295, 306-326, 333-353, 367-387, and 396-416; these read LIPALVILYLVAYIDRAAVGF, GIGDAAYGLGAGLFFIGYFLF, ILLTWGLITMAMALIQGPKSF, FLLGVAEAGFFPGVLYLITQW, MFVLSQPIAMMIAGPLAGLLL, WLFVAVGLPAVLLALPTFLWL, VLLLALYYLPVTLSIYGLNLW, IQIGFLSSIPYIFGIIGLLII, YGHLSFLYALGACAMFLSGWL, LAALAVVAFCLFSSTAVFWTL, IALINSVGNLGGYVGPFGIGL, and AAGLYFLSIVMLFGLILTYIV.

Belongs to the major facilitator superfamily.

Its subcellular location is the cell inner membrane. Functionally, efflux pump that mediates resistance to quinolone-type antibiotics. The protein is Quinolone resistance transporter of Acinetobacter baumannii.